The chain runs to 484 residues: MKVLFAVSECVPFVKSGGLADVAGALPKELALLGIETVVMMPKYSLIAEDVRRRMVKTAECEVRVGWRRQFCGIEHLEHDGVSYYFLDHGYYFNRDSLYGHYDDGERFAFFSRAVLEALYALNFEADVIHTHDWHTGMVNYLLKEEYRKKPFYQHMKSVFTIHNLQFQGIFPKEAVHDLLGLDISHFTTEKLEFYGNINYMKGGIIAADQVTTVSPTYRDEILTPYYGERLEGVLSDKKDALTGILNGIDDVLYDPLNDPHIDYHYDAVNRDGKRKNKAVIQKTFGLPVNEDIPLISMVARLTKQKGFDLIKRVLHELFEEEDMQLIVLGTGEAEFENYFRYMEHAFPDRCKAYIGFHEPLSRKIYAASDLFLMPSKFEPCGLGQLIALRYGAVPVVRETGGLHDTVTAYRETTGEGNGFTFAHFNAHDMKHTIKRALSFYHRKEEWGRIVQKAMTHDVSWALSARQYQRLYSREIKGEAHVLK.

ADP-alpha-D-glucose is bound at residue Lys-15.

The protein belongs to the glycosyltransferase 1 family. Bacterial/plant glycogen synthase subfamily.

The catalysed reaction is [(1-&gt;4)-alpha-D-glucosyl](n) + ADP-alpha-D-glucose = [(1-&gt;4)-alpha-D-glucosyl](n+1) + ADP + H(+). Its pathway is glycan biosynthesis; glycogen biosynthesis. Functionally, synthesizes alpha-1,4-glucan chains using ADP-glucose. The protein is Glycogen synthase of Bacillus licheniformis (strain ATCC 14580 / DSM 13 / JCM 2505 / CCUG 7422 / NBRC 12200 / NCIMB 9375 / NCTC 10341 / NRRL NRS-1264 / Gibson 46).